We begin with the raw amino-acid sequence, 142 residues long: Putative pre-16S rRNA nuclease (142 aa).

This sequence belongs to the YqgF nuclease family.

The protein resides in the cytoplasm. In terms of biological role, could be a nuclease involved in processing of the 5'-end of pre-16S rRNA. The sequence is that of Putative pre-16S rRNA nuclease from Malacoplasma penetrans (strain HF-2) (Mycoplasma penetrans).